The sequence spans 277 residues: Shikimate dehydrogenase (NADP(+)) (277 aa).

Shikimate contacts are provided by residues 15–17 and Thr62; that span reads SLS. Catalysis depends on Lys66, which acts as the Proton acceptor. Positions 87 and 102 each coordinate shikimate. Residues 127 to 131 and Ile219 contribute to the NADP(+) site; that span reads GAGGA. Tyr221 contributes to the shikimate binding site. Gly242 lines the NADP(+) pocket.

This sequence belongs to the shikimate dehydrogenase family. Homodimer.

It carries out the reaction shikimate + NADP(+) = 3-dehydroshikimate + NADPH + H(+). The protein operates within metabolic intermediate biosynthesis; chorismate biosynthesis; chorismate from D-erythrose 4-phosphate and phosphoenolpyruvate: step 4/7. Functionally, involved in the biosynthesis of the chorismate, which leads to the biosynthesis of aromatic amino acids. Catalyzes the reversible NADPH linked reduction of 3-dehydroshikimate (DHSA) to yield shikimate (SA). This chain is Shikimate dehydrogenase (NADP(+)), found in Bacillus cytotoxicus (strain DSM 22905 / CIP 110041 / 391-98 / NVH 391-98).